Reading from the N-terminus, the 101-residue chain is Small ribosomal subunit protein bS18c (101 aa).

This sequence belongs to the bacterial ribosomal protein bS18 family. Part of the 30S ribosomal subunit.

The protein localises to the plastid. The protein resides in the chloroplast. The sequence is that of Small ribosomal subunit protein bS18c from Panax ginseng (Korean ginseng).